The primary structure comprises 352 residues: Quinolinate synthase (352 aa).

Iminosuccinate is bound by residues histidine 48 and serine 69. [4Fe-4S] cluster is bound at residue cysteine 114. Residues 140-142 and serine 157 contribute to the iminosuccinate site; that span reads YAN. Cysteine 201 provides a ligand contact to [4Fe-4S] cluster. Iminosuccinate is bound by residues 227–229 and threonine 244; that span reads HPE. A [4Fe-4S] cluster-binding site is contributed by cysteine 298.

This sequence belongs to the quinolinate synthase family. Type 1 subfamily. The cofactor is [4Fe-4S] cluster.

It is found in the cytoplasm. The enzyme catalyses iminosuccinate + dihydroxyacetone phosphate = quinolinate + phosphate + 2 H2O + H(+). Its pathway is cofactor biosynthesis; NAD(+) biosynthesis; quinolinate from iminoaspartate: step 1/1. Its function is as follows. Catalyzes the condensation of iminoaspartate with dihydroxyacetone phosphate to form quinolinate. This is Quinolinate synthase from Pseudomonas syringae pv. tomato (strain ATCC BAA-871 / DC3000).